Consider the following 772-residue polypeptide: Hyperosmolality-gated Ca2+ permeable channel 1.1 (772 aa).

Topologically, residues 1 to 5 (MATLK) are extracellular. Residues 6 to 28 (DIGVSAGINILTAFIFFIIFAFL) traverse the membrane as a helical segment. The Cytoplasmic portion of the chain corresponds to 29–100 (RLQPFNDRVY…AGLDSVVYLR (72 aa)). The chain crosses the membrane as a helical span at residues 101–122 (IYWLGLKIFAPIAMLAWAVLVP). At 123–159 (VNWTNNELELAKHFKNVTSSDIDKLTISNIPEGSNRF) the chain is on the extracellular side. Asparagine 138 carries N-linked (GlcNAc) asparagine glycosylation. A helical membrane pass occupies residues 160 to 180 (WAHIIMAYAFTIWTCYMLMKE). Residues 181–372 (YETVANMRLQ…PNLAIPYVSL (192 aa)) are Cytoplasmic-facing. Residues 339 to 344 (QTTQTR) form a cytoplasmic region required for homodimerization region. The helical transmembrane segment at 373–398 (TVRRLVMNVAFFFLTFFFIIPIAFVQ) threads the bilayer. The Extracellular portion of the chain corresponds to 399 to 424 (SLATIEGIEKVAPFLKVIIEKDFIKS). A helical transmembrane segment spans residues 425–450 (LIQGLLAGIALKLFLIFLPAILMTMS). The Cytoplasmic portion of the chain corresponds to 451-461 (KFEGFTSVSFL). A helical membrane pass occupies residues 462 to 485 (ERRSASRYYIFNLVNVFLGSVIAG). Over 486 to 509 (AAFEQLNSFLNQSPNQIPKTIGMA) the chain is Extracellular. The chain crosses the membrane as a helical span at residues 510–538 (IPMKATFFITYIMVDGWAGVAGEILMLKP). Topologically, residues 539 to 566 (LIIYHLKNAFLVKTEKDREEAMNPGSIG) are cytoplasmic. Residues 567 to 587 (FNTGEPQIQLYFLLGLVYAPV) traverse the membrane as a helical segment. Threonine 588 is a topological domain (extracellular). The chain crosses the membrane as a helical span at residues 589–606 (PMLLPFILVFFALAYVVY). The Cytoplasmic portion of the chain corresponds to 607-624 (RHQIINVYNQEYESAAAF). A helical membrane pass occupies residues 625-647 (WPDVHGRVITALIISQLLLMGLL). The Extracellular segment spans residues 648-653 (GTKHAA). The helical transmembrane segment at 654 to 674 (SAAPFLIALPVITIGFHRFCK) threads the bilayer. Over 675-772 (GRFEPAFVRY…SLAVINGKEV (98 aa)) the chain is Cytoplasmic. Positions 686–688 (LQE) are cytoplasmic region required for homodimerization. The segment at 743–772 (KRQSRRNTPAPSRISGESSPSLAVINGKEV) is disordered. Polar residues predominate over residues 748 to 763 (RNTPAPSRISGESSPS).

It belongs to the CSC1 (TC 1.A.17) family. As to quaternary structure, homodimer. In terms of tissue distribution, expressed in leaves, flowers, roots and guard cells.

Its subcellular location is the cell membrane. Its activity is regulated as follows. Activated by mechanical pressure. Its function is as follows. Acts as a hyperosmolarity-gated non-selective cation channel that permeates Ca(2+) ions. Shows the following permeability sequence: K(+) &gt; Ba(2+) = Ca(2+) &gt; Na(+) = Mg(2+) = Cs(+). Mechanosensitive ion channel that converts mechanical stimuli into a flow of ions: activated in response to membrane stretch and poke. The polypeptide is Hyperosmolality-gated Ca2+ permeable channel 1.1 (Arabidopsis thaliana (Mouse-ear cress)).